The chain runs to 49 residues: uncharacterized protein (49 aa).

Residues 5-27 (ILEILSAFIRILFKLLYCWALFF) traverse the membrane as a helical segment.

The protein localises to the membrane. This is an uncharacterized protein from Saccharomyces cerevisiae (strain ATCC 204508 / S288c) (Baker's yeast).